A 149-amino-acid chain; its full sequence is UPF0208 membrane protein PBPRA2797 (149 aa).

The next 2 helical transmembrane spans lie at 41–60 (FATRVMPAVAVMSVLSQMAF) and 65–87 (ALPQAMTVALFALTMPLQGLWWL).

The protein belongs to the UPF0208 family.

It localises to the cell inner membrane. This chain is UPF0208 membrane protein PBPRA2797, found in Photobacterium profundum (strain SS9).